Reading from the N-terminus, the 697-residue chain is Envelope glycoprotein G (697 aa).

The signal sequence occupies residues 1 to 22; sequence MHAIAPRLLLLFVLSGLPGTRG. Topologically, residues 23–648 are virion surface; it reads GSGVPGPINP…WFLTASPALD (626 aa). Asn-104 and Asn-163 each carry an N-linked (GlcNAc...) asparagine; by host glycan. Disordered regions lie at residues 298-389 and 402-630; these read HWAP…TTPP and TPEE…PSGP. The span at 322-335 shows a compositional bias: basic and acidic residues; that stretch reads LRTDPEGVDPDVRA. 2 stretches are compositionally biased toward low complexity: residues 375 to 389 and 402 to 445; these read DPSA…TTPP and TPEE…AKTP. N-linked (GlcNAc...) asparagine; by host glycosylation is present at Asn-435. Composition is skewed to pro residues over residues 446–457 and 465–480; these read PTTPAPTTPPPT and PTTP…PATP. A compositionally biased stretch (low complexity) spans 481-529; sequence GPVGASAAPTADSPLTALPPATAPGPSAANVSVAATTATPGTRGTARTP. An N-linked (GlcNAc...) asparagine; by host glycan is attached at Asn-510. The span at 542–552 shows a compositional bias: pro residues; sequence DAPPGSPAPPP. A compositionally biased stretch (acidic residues) spans 560–576; that stretch reads EEFEGAGDGEPPEDDDS. The span at 587 to 603 shows a compositional bias: pro residues; that stretch reads PNKPPPARPGPIRPTLP. The helical transmembrane segment at 649–669 threads the bilayer; sequence ILFIISTTIHTAAFVCLVALA. The Intravirion segment spans residues 670–697; it reads AQLWRGRAGRRRYAHPSVRYVCLPPERD.

The protein belongs to the alphaherpesvirinae glycoprotein G family.

It is found in the virion membrane. Chemokine-binding protein that inhibits neutrophils' chemotaxis. This Homo sapiens (Human) protein is Envelope glycoprotein G (gG).